Consider the following 290-residue polypeptide: Ribosomal RNA small subunit methyltransferase A (290 aa).

S-adenosyl-L-methionine contacts are provided by Asn27, Leu29, Gly54, Glu75, Asp100, and Asn125.

The protein belongs to the class I-like SAM-binding methyltransferase superfamily. rRNA adenine N(6)-methyltransferase family. RsmA subfamily.

It is found in the cytoplasm. The catalysed reaction is adenosine(1518)/adenosine(1519) in 16S rRNA + 4 S-adenosyl-L-methionine = N(6)-dimethyladenosine(1518)/N(6)-dimethyladenosine(1519) in 16S rRNA + 4 S-adenosyl-L-homocysteine + 4 H(+). Functionally, specifically dimethylates two adjacent adenosines (A1518 and A1519) in the loop of a conserved hairpin near the 3'-end of 16S rRNA in the 30S particle. May play a critical role in biogenesis of 30S subunits. This chain is Ribosomal RNA small subunit methyltransferase A, found in Streptococcus pneumoniae (strain ATCC 700669 / Spain 23F-1).